Consider the following 717-residue polypeptide: Polyribonucleotide nucleotidyltransferase (717 aa).

Residues Asp486 and Asp492 each contribute to the Mg(2+) site. In terms of domain architecture, KH spans 553 to 612 (PKIVQLQIDIDKISLVIGSTGKTVKAITDEFEVRVQIEQDGRITLFGTDNLKMQKAKAKI). An S1 motif domain is found at 622–715 (GEIYDGIVKK…KFGKIELELA (94 aa)). Positions 650 to 681 (SNRSRSRDDRYGSDIRHSRYSNRNSRYGRDNR) are disordered. A compositionally biased stretch (basic and acidic residues) spans 654–666 (RSRDDRYGSDIRH).

The protein belongs to the polyribonucleotide nucleotidyltransferase family. Requires Mg(2+) as cofactor.

It is found in the cytoplasm. It catalyses the reaction RNA(n+1) + phosphate = RNA(n) + a ribonucleoside 5'-diphosphate. Functionally, involved in mRNA degradation. Catalyzes the phosphorolysis of single-stranded polyribonucleotides processively in the 3'- to 5'-direction. The chain is Polyribonucleotide nucleotidyltransferase from Borrelia duttonii (strain Ly).